The chain runs to 348 residues: MLYSLLRPLVFALEPETAHGIAFNAMETAHRLGLYRARPAPCRSRSIMGLTFPNPVGLAAGLDKNGEHIDALAALGFGFIEIGTVTPRPQPGNPKPRLFRLPQANSIINRMGFNNNGIEGLVANVKAMDYKGILGINIGKNFDTPVEKAVDDYLICLRKAYRYASYITVNISSPNTPNLRQLQQATELDSLLGTLKLNQQRLADEHGKYTPLLVKIAPDLELPEIDSIAALLMKHRVDGVIATNTTLSRAGVETLPHAREAGGLSGAPLAKRATSVVARLHHALQGALPIIGVGGIMDAAGATEKIAAGASLIQVYSGLVYRGPHLVGEIAQVLCNANGGGLDGASST.

FMN contacts are provided by residues Ala60–Lys64 and Thr84. Lys64 contacts substrate. Asn109 to Phe113 lines the substrate pocket. Positions 137 and 170 each coordinate FMN. A substrate-binding site is contributed by Asn170. Catalysis depends on Ser173, which acts as the Nucleophile. A substrate-binding site is contributed by Asn175. Residues Lys215 and Thr243 each coordinate FMN. Residue Asn244–Thr245 participates in substrate binding. FMN is bound by residues Gly266, Gly295, and Tyr316–Ser317.

The protein belongs to the dihydroorotate dehydrogenase family. Type 2 subfamily. Monomer. The cofactor is FMN.

It localises to the cell membrane. The enzyme catalyses (S)-dihydroorotate + a quinone = orotate + a quinol. It functions in the pathway pyrimidine metabolism; UMP biosynthesis via de novo pathway; orotate from (S)-dihydroorotate (quinone route): step 1/1. Its function is as follows. Catalyzes the conversion of dihydroorotate to orotate with quinone as electron acceptor. This chain is Dihydroorotate dehydrogenase (quinone), found in Nitrosospira multiformis (strain ATCC 25196 / NCIMB 11849 / C 71).